A 193-amino-acid chain; its full sequence is Ribonuclease HII (193 aa).

The region spanning 3–192 is the RNase H type-2 domain; the sequence is SLVAGIDEVG…VRAVIDRSSA (190 aa). 3 residues coordinate a divalent metal cation: Asp-9, Glu-10, and Asp-101.

Belongs to the RNase HII family. Mn(2+) serves as cofactor. It depends on Mg(2+) as a cofactor.

Its subcellular location is the cytoplasm. The enzyme catalyses Endonucleolytic cleavage to 5'-phosphomonoester.. Its function is as follows. Endonuclease that specifically degrades the RNA of RNA-DNA hybrids. This Methylococcus capsulatus (strain ATCC 33009 / NCIMB 11132 / Bath) protein is Ribonuclease HII.